The sequence spans 179 residues: Large ribosomal subunit protein uL6 (179 aa).

It belongs to the universal ribosomal protein uL6 family. In terms of assembly, part of the 50S ribosomal subunit.

Its function is as follows. This protein binds to the 23S rRNA, and is important in its secondary structure. It is located near the subunit interface in the base of the L7/L12 stalk, and near the tRNA binding site of the peptidyltransferase center. The polypeptide is Large ribosomal subunit protein uL6 (Buchnera aphidicola subsp. Baizongia pistaciae (strain Bp)).